A 308-amino-acid polypeptide reads, in one-letter code: Aspartate carbamoyltransferase catalytic subunit (308 aa).

Positions 57 and 58 each coordinate carbamoyl phosphate. Residue lysine 86 coordinates L-aspartate. Arginine 107, histidine 135, and glutamine 138 together coordinate carbamoyl phosphate. L-aspartate contacts are provided by arginine 167 and arginine 228. Leucine 267 and proline 268 together coordinate carbamoyl phosphate.

This sequence belongs to the aspartate/ornithine carbamoyltransferase superfamily. ATCase family. As to quaternary structure, heterooligomer of catalytic and regulatory chains.

It catalyses the reaction carbamoyl phosphate + L-aspartate = N-carbamoyl-L-aspartate + phosphate + H(+). The protein operates within pyrimidine metabolism; UMP biosynthesis via de novo pathway; (S)-dihydroorotate from bicarbonate: step 2/3. Its function is as follows. Catalyzes the condensation of carbamoyl phosphate and aspartate to form carbamoyl aspartate and inorganic phosphate, the committed step in the de novo pyrimidine nucleotide biosynthesis pathway. In Methanosarcina barkeri (strain Fusaro / DSM 804), this protein is Aspartate carbamoyltransferase catalytic subunit.